Consider the following 185-residue polypeptide: ATP synthase subunit b (185 aa).

The chain crosses the membrane as a helical span at residues 27–47; it reads GALIWKGLNILAFLGIVYYFG.

It belongs to the ATPase B chain family. F-type ATPases have 2 components, F(1) - the catalytic core - and F(0) - the membrane proton channel. F(1) has five subunits: alpha(3), beta(3), gamma(1), delta(1), epsilon(1). F(0) has three main subunits: a(1), b(2) and c(10-14). The alpha and beta chains form an alternating ring which encloses part of the gamma chain. F(1) is attached to F(0) by a central stalk formed by the gamma and epsilon chains, while a peripheral stalk is formed by the delta and b chains.

Its subcellular location is the cell inner membrane. Functionally, f(1)F(0) ATP synthase produces ATP from ADP in the presence of a proton or sodium gradient. F-type ATPases consist of two structural domains, F(1) containing the extramembraneous catalytic core and F(0) containing the membrane proton channel, linked together by a central stalk and a peripheral stalk. During catalysis, ATP synthesis in the catalytic domain of F(1) is coupled via a rotary mechanism of the central stalk subunits to proton translocation. Its function is as follows. Component of the F(0) channel, it forms part of the peripheral stalk, linking F(1) to F(0). The chain is ATP synthase subunit b from Aquifex aeolicus (strain VF5).